A 59-amino-acid polypeptide reads, in one-letter code: MRQLKGKPKKETSKDKKERKQAMQEARQQITTVVLPTLAVVVLLIVVFVYVATRPAVTE.

Residues 1 to 23 (MRQLKGKPKKETSKDKKERKQAM) form a disordered region. A compositionally biased stretch (basic and acidic residues) spans 9-22 (KKETSKDKKERKQA). Residues 9 to 31 (KKETSKDKKERKQAMQEARQQIT) are a coiled coil. Residues 32–52 (TVVLPTLAVVVLLIVVFVYVA) traverse the membrane as a helical segment.

The protein belongs to the SMCO4 family.

Its subcellular location is the membrane. In Mus musculus (Mouse), this protein is Single-pass membrane and coiled-coil domain-containing protein 4 (Smco4).